Reading from the N-terminus, the 543-residue chain is CTP synthase (543 aa).

Positions 1 to 267 (MAKFVFVTGG…CREVLDVLNL (267 aa)) are amidoligase domain. CTP is bound at residue serine 13. Serine 13 serves as a coordination point for UTP. 14 to 19 (SIGKGI) is a binding site for ATP. Tyrosine 54 is a binding site for L-glutamine. Aspartate 71 is a binding site for ATP. Mg(2+) is bound by residues aspartate 71 and glutamate 141. CTP contacts are provided by residues 148–150 (DIE), 188–193 (KTKPTQ), and lysine 224. Residues 188–193 (KTKPTQ) and lysine 224 each bind UTP. A Glutamine amidotransferase type-1 domain is found at 292 to 534 (KVALVGKYVQ…IEAAQQRLPN (243 aa)). Residue glycine 354 coordinates L-glutamine. Cysteine 381 acts as the Nucleophile; for glutamine hydrolysis in catalysis. L-glutamine contacts are provided by residues 382–385 (LGMQ), glutamate 405, and arginine 462. Catalysis depends on residues histidine 507 and glutamate 509.

The protein belongs to the CTP synthase family. Homotetramer.

The enzyme catalyses UTP + L-glutamine + ATP + H2O = CTP + L-glutamate + ADP + phosphate + 2 H(+). It carries out the reaction L-glutamine + H2O = L-glutamate + NH4(+). It catalyses the reaction UTP + NH4(+) + ATP = CTP + ADP + phosphate + 2 H(+). It functions in the pathway pyrimidine metabolism; CTP biosynthesis via de novo pathway; CTP from UDP: step 2/2. Its activity is regulated as follows. Allosterically activated by GTP, when glutamine is the substrate; GTP has no effect on the reaction when ammonia is the substrate. The allosteric effector GTP functions by stabilizing the protein conformation that binds the tetrahedral intermediate(s) formed during glutamine hydrolysis. Inhibited by the product CTP, via allosteric rather than competitive inhibition. Its function is as follows. Catalyzes the ATP-dependent amination of UTP to CTP with either L-glutamine or ammonia as the source of nitrogen. Regulates intracellular CTP levels through interactions with the four ribonucleotide triphosphates. In Synechococcus sp. (strain WH7803), this protein is CTP synthase.